A 375-amino-acid polypeptide reads, in one-letter code: Methylthioribose-1-phosphate isomerase (375 aa).

Residue Asp-257 is the Proton donor of the active site.

The protein belongs to the eIF-2B alpha/beta/delta subunits family. MtnA subfamily.

The protein localises to the cytoplasm. It is found in the nucleus. It carries out the reaction 5-(methylsulfanyl)-alpha-D-ribose 1-phosphate = 5-(methylsulfanyl)-D-ribulose 1-phosphate. It functions in the pathway amino-acid biosynthesis; L-methionine biosynthesis via salvage pathway; L-methionine from S-methyl-5-thio-alpha-D-ribose 1-phosphate: step 1/6. In terms of biological role, catalyzes the interconversion of methylthioribose-1-phosphate (MTR-1-P) into methylthioribulose-1-phosphate (MTRu-1-P). The protein is Methylthioribose-1-phosphate isomerase of Leishmania infantum.